A 309-amino-acid polypeptide reads, in one-letter code: Uricase-2 isozyme 2 (309 aa).

Residues Lys18 and Thr64 each act as charge relay system in the active site. Positions 64, 65, 166, 183, 238, 239, and 265 each coordinate urate. His267 acts as the Charge relay system in catalysis.

The protein belongs to the uricase family. As to quaternary structure, homotetramer.

It is found in the peroxisome. The enzyme catalyses urate + O2 + H2O = 5-hydroxyisourate + H2O2. It participates in purine metabolism; urate degradation; (S)-allantoin from urate: step 1/3. Functionally, catalyzes the oxidation of uric acid to 5-hydroxyisourate, which is further processed to form (S)-allantoin. In Glycine max (Soybean), this protein is Uricase-2 isozyme 2.